The sequence spans 700 residues: Stonustoxin subunit beta (700 aa).

Residues 2 to 264 (PSDILVVAAL…EAPQLMADSS (263 aa)) form a structural MACPF/CDC pore-forming domain region. The structural FAT domain stretch occupies residues 265–384 (TPILRKVRNT…DILTKAKPKV (120 aa)). A thioredoxin (THX) domain region spans residues 385 to 514 (IFNQGVLFKG…PYMPGVESIK (130 aa)). One can recognise a B30.2/SPRY domain in the interval 506 to 700 (YMPGVESIKD…QKVNGQIKLL (195 aa)).

It belongs to the SNTX/VTX toxin family. In terms of assembly, heterodimer of alpha and beta subunits; non-covalently linked. Post-translationally, intrachain disulfide bonds may be present in the heterodimer. Not glycosylated. In terms of tissue distribution, expressed by the venom gland.

It localises to the secreted. Functionally, this lethal (towards mammals) heterodimer induces hemolytic activities due to its ability to form pores in the cell membrane. The pore may be composed of 10 SNTX-alpha/beta heterodimers. The toxin elicits potent hypotension which is endothelium-dependent and appears to be mediated by the nitric oxide pathway and activation of potassium channels. In addition, it displays edema-inducing activities, increases vascular permeability. It also shows myotoxic activities and interferes irreversibly with neuromuscular function. It also induces irreversible platelet aggregation in rabbit or rat but not in human or mouse whole blood. In addition, it has been observed to increase spontaneous quantal acetylcholine release from isolated frog cutaneous pectoris motor endings. The protein is Stonustoxin subunit beta of Synanceia horrida (Estuarine stonefish).